A 126-amino-acid chain; its full sequence is UPF0538 protein C2orf76 homolog (126 aa).

Belongs to the UPF0538 family.

The protein is UPF0538 protein C2orf76 homolog of Mus musculus (Mouse).